The primary structure comprises 226 residues: MGKGRGRHPSRLKVKPPEPEILAKYLHHWNTKELYHHPDTFLQVSSPSFFQNENPLEIDIGCATGDLVCSLAQKNPQVNFIGVEVSMKPLYRAIKYSVREQIENVRFIKTDFRLLYPLLPDASVQKIFFHFPVPVVRAKDSKYLIFSEDFLSEMHRALQVGGMISVISDSAEYFPIMRELGQNDTRYELISDEAKCMALEPDEKSYYHKYWDAQGREKFRFILVKK.

Residues Asp59, Glu84, and Asp111 each coordinate S-adenosyl-L-methionine. Asp169 is a binding site for substrate.

The protein belongs to the class I-like SAM-binding methyltransferase superfamily. TrmB family.

The enzyme catalyses guanosine(46) in tRNA + S-adenosyl-L-methionine = N(7)-methylguanosine(46) in tRNA + S-adenosyl-L-homocysteine. The protein operates within tRNA modification; N(7)-methylguanine-tRNA biosynthesis. Catalyzes the formation of N(7)-methylguanine at position 46 (m7G46) in tRNA. This is tRNA (guanine-N(7)-)-methyltransferase from Chloroherpeton thalassium (strain ATCC 35110 / GB-78).